A 549-amino-acid chain; its full sequence is Glucoamylase, intracellular sporulation-specific (549 aa).

Tryptophan 198 provides a ligand contact to substrate. Aspartate 261 functions as the Proton acceptor in the catalytic mechanism. Glutamate 264 serves as the catalytic Proton donor.

It belongs to the glycosyl hydrolase 15 family.

It catalyses the reaction Hydrolysis of terminal (1-&gt;4)-linked alpha-D-glucose residues successively from non-reducing ends of the chains with release of beta-D-glucose.. This Saccharomyces cerevisiae (strain ATCC 204508 / S288c) (Baker's yeast) protein is Glucoamylase, intracellular sporulation-specific (SGA1).